A 908-amino-acid polypeptide reads, in one-letter code: Protein translocase subunit SecA (908 aa).

ATP is bound by residues Gln-87, 105–109 (GEGKT), and Asp-511. Residues 559 to 570 (ERHESRRIDNQL) show a composition bias toward basic and acidic residues. 2 disordered regions span residues 559 to 582 (ERHESRRIDNQLRGRSGRQGDPGS) and 841 to 908 (RRRR…GRLE). Residues 847 to 856 (LAQQMQRAQA) are compositionally biased toward low complexity. The span at 862-873 (TEEDSDAEEQAE) shows a compositional bias: acidic residues. Zn(2+)-binding residues include Cys-892, Cys-894, Cys-903, and His-904. The segment covering 898–908 (KKYKQCHGRLE) has biased composition (basic residues).

It belongs to the SecA family. Monomer and homodimer. Part of the essential Sec protein translocation apparatus which comprises SecA, SecYEG and auxiliary proteins SecDF-YajC and YidC. Zn(2+) is required as a cofactor.

Its subcellular location is the cell inner membrane. It is found in the cytoplasm. It carries out the reaction ATP + H2O + cellular proteinSide 1 = ADP + phosphate + cellular proteinSide 2.. Functionally, part of the Sec protein translocase complex. Interacts with the SecYEG preprotein conducting channel. Has a central role in coupling the hydrolysis of ATP to the transfer of proteins into and across the cell membrane, serving both as a receptor for the preprotein-SecB complex and as an ATP-driven molecular motor driving the stepwise translocation of polypeptide chains across the membrane. The polypeptide is Protein translocase subunit SecA (Hahella chejuensis (strain KCTC 2396)).